The sequence spans 77 residues: UPF0154 protein LCK_00994 (77 aa).

The helical transmembrane segment at 5–25 (FGILIFVLGLVIGLVIGFFVA) threads the bilayer. The segment at 50–77 (SMGQKPSQKKLNQMMAQMKQQSEQSQKK) is disordered.

This sequence belongs to the UPF0154 family.

The protein resides in the cell membrane. The chain is UPF0154 protein LCK_00994 from Leuconostoc citreum (strain KM20).